The chain runs to 340 residues: Guanine nucleotide-binding protein G(I)/G(S)/G(T) subunit beta-3 (340 aa).

7 WD repeats span residues 53–83 (GHLA…IVWD), 95–125 (LRSS…SIYS), 141–170 (AHTG…ALWD), 182–212 (GHTG…KLWD), 224–254 (GHES…RLFD), 268–298 (SIIC…NVWD), and 310–340 (GHDN…KIWN).

This sequence belongs to the WD repeat G protein beta family. As to quaternary structure, g proteins are composed of 3 units, alpha, beta and gamma. Interacts with RASD2. Expressed at a high level in the heart and at a much lower level in the brain.

Functionally, guanine nucleotide-binding proteins (G proteins) are involved as a modulator or transducer in various transmembrane signaling systems. The beta and gamma chains are required for the GTPase activity, for replacement of GDP by GTP, and for G protein-effector interaction. The sequence is that of Guanine nucleotide-binding protein G(I)/G(S)/G(T) subunit beta-3 (Gnb3) from Rattus norvegicus (Rat).